Here is a 266-residue protein sequence, read N- to C-terminus: Killer cell lectin-like receptor 3 (266 aa).

Over 1-48 (MSEPEVTYSTVRLHKSSGLQKLVRHEETQGPREVGNRKCSAPWQLIVK) the chain is Cytoplasmic. A helical; Signal-anchor for type II membrane protein transmembrane segment spans residues 49 to 69 (ALGILCFLLLVTVAVLAVKIF). Residues 70–266 (QYNQHKQEIN…CGKKLDKFPD (197 aa)) are Extracellular-facing. Asn79, Asn87, Asn104, and Asn113 each carry an N-linked (GlcNAc...) asparagine glycan. The interval 147–151 (WFCYS) is involved in dimerization. Cys149 and Cys154 form a disulfide bridge. Positions 150-258 (YSTKCYYFIM…CNIPYYCICG (109 aa)) constitute a C-type lectin domain. A glycan (N-linked (GlcNAc...) asparagine) is linked at Asn160. Implicated in MHC class I binding stretches follow at residues 160-162 (NKT), 195-196 (IP), 207-208 (KK), 224-233 (MKIRKMNFKS), and 240-245 (SKARIE). 3 disulfide bridges follow: Cys167/Cys255, Cys171/Cys257, and Cys236/Cys249.

In terms of assembly, homodimer; disulfide-linked.

It localises to the membrane. Receptor on natural killer (NK) cells for class I MHC. The chain is Killer cell lectin-like receptor 3 (Klra3) from Mus musculus (Mouse).